The following is a 219-amino-acid chain: Lipid transferase CIDEB (219 aa).

In terms of domain architecture, CIDE-N spans Pro33–Pro110.

This sequence belongs to the CIDE family. As to quaternary structure, interacts with DFFA. Interacts with DFFB; inhibited by DFFB. Interacts with APOB. Interacts with PREB/SEC12; facilitating loading of SCAP-SREBP into COPII vesicles.

It is found in the lipid droplet. Its subcellular location is the endoplasmic reticulum membrane. The protein resides in the golgi apparatus. The protein localises to the cytoplasmic vesicle. It localises to the COPI-coated vesicle. Its function is as follows. Lipid transferase specifically expressed in hepatocytes, which promotes unilocular lipid droplet formation by mediating lipid droplet fusion. Lipid droplet fusion promotes their enlargement, restricting lipolysis and favoring lipid storage. Localizes on the lipid droplet surface, at focal contact sites between lipid droplets, and mediates atypical lipid droplet fusion by promoting directional net neutral lipid transfer from the smaller to larger lipid droplets. The transfer direction may be driven by the internal pressure difference between the contacting lipid droplet pair. Promotes lipid exchange and lipid droplet fusion in both small and large lipid droplet-containing hepatocytes. In addition to its role in lipid droplet fusion, also involved in cytoplasmic vesicle biogenesis and transport. Required for very-low-density lipoprotein (VLDL) lipidation and maturation. Probably involved in the biogenesis of VLDL transport vesicles by forming a COPII vesicle coat and facilitating the formation of endoplasmic reticulum-derived large vesicles. Also involved in sterol-regulated export of the SCAP-SREBP complex, composed of SCAP, SREBF1/SREBP1 and SREBF2/SREBP2, by promoting loading of SCAP-SREBP into COPII vesicles. May also activate apoptosis. The chain is Lipid transferase CIDEB (CIDEB) from Bos taurus (Bovine).